Here is a 355-residue protein sequence, read N- to C-terminus: S-adenosylmethionine:tRNA ribosyltransferase-isomerase (355 aa).

Belongs to the QueA family. Monomer.

It localises to the cytoplasm. The catalysed reaction is 7-aminomethyl-7-carbaguanosine(34) in tRNA + S-adenosyl-L-methionine = epoxyqueuosine(34) in tRNA + adenine + L-methionine + 2 H(+). The protein operates within tRNA modification; tRNA-queuosine biosynthesis. Transfers and isomerizes the ribose moiety from AdoMet to the 7-aminomethyl group of 7-deazaguanine (preQ1-tRNA) to give epoxyqueuosine (oQ-tRNA). The protein is S-adenosylmethionine:tRNA ribosyltransferase-isomerase of Gluconacetobacter diazotrophicus (strain ATCC 49037 / DSM 5601 / CCUG 37298 / CIP 103539 / LMG 7603 / PAl5).